The sequence spans 682 residues: NAD(+)--arginine ADP-ribosyltransferase (682 aa).

A TR mART core domain is found at 383–614 (KIIRRELRGY…KLIQAEVMTT (232 aa)). Residues arginine 478, serine 503, and glutamate 576 contribute to the active site.

The protein belongs to the Tevenvirinae NAD(+)--arginine ADP-ribosyltransferase family. Proteolytic cleavages at the N- and C-termini by the prohead core protein protease give rise to the mature enzyme.

Its subcellular location is the virion. It carries out the reaction L-arginyl-[protein] + NAD(+) = N(omega)-(ADP-D-ribosyl)-L-arginyl-[protein] + nicotinamide + H(+). ADP-ribosyltransferase that efficiently ADP-ribosylates one of the two alpha subunits of host RNA polymerase RPOA on an arginine located in the C-terminal region. ADP-ribosylation of RPOA alpha subunit enhances the transcription of viral early genes. Also ribosylates RPOA subunits beta, beta' and sigma 70 and performs an autoribosylation reaction. Additional in-vitro identified targets include proteins involved in either translation or cellular metabolism such as elongation factor-Tu or GroeL. Mono-ADP-ribosylates host MAZF which may inactivate the latter. The chain is NAD(+)--arginine ADP-ribosyltransferase (alt) from Escherichia coli (Bacteriophage T4).